The sequence spans 190 residues: Threonylcarbamoyl-AMP synthase (190 aa).

Residues 7–190 enclose the YrdC-like domain; the sequence is GDAIAAAIDV…ALTGELFRQG (184 aa).

Belongs to the SUA5 family. TsaC subfamily.

It localises to the cytoplasm. It catalyses the reaction L-threonine + hydrogencarbonate + ATP = L-threonylcarbamoyladenylate + diphosphate + H2O. Its function is as follows. Required for the formation of a threonylcarbamoyl group on adenosine at position 37 (t(6)A37) in tRNAs that read codons beginning with adenine. Catalyzes the conversion of L-threonine, HCO(3)(-)/CO(2) and ATP to give threonylcarbamoyl-AMP (TC-AMP) as the acyladenylate intermediate, with the release of diphosphate. This is Threonylcarbamoyl-AMP synthase from Shigella boydii serotype 4 (strain Sb227).